Consider the following 346-residue polypeptide: UDP-3-O-acylglucosamine N-acyltransferase (346 aa).

Catalysis depends on His-253, which acts as the Proton acceptor.

The protein belongs to the transferase hexapeptide repeat family. LpxD subfamily. Homotrimer.

It carries out the reaction a UDP-3-O-[(3R)-3-hydroxyacyl]-alpha-D-glucosamine + a (3R)-hydroxyacyl-[ACP] = a UDP-2-N,3-O-bis[(3R)-3-hydroxyacyl]-alpha-D-glucosamine + holo-[ACP] + H(+). It functions in the pathway bacterial outer membrane biogenesis; LPS lipid A biosynthesis. Its function is as follows. Catalyzes the N-acylation of UDP-3-O-acylglucosamine using 3-hydroxyacyl-ACP as the acyl donor. Is involved in the biosynthesis of lipid A, a phosphorylated glycolipid that anchors the lipopolysaccharide to the outer membrane of the cell. This chain is UDP-3-O-acylglucosamine N-acyltransferase, found in Rickettsia typhi (strain ATCC VR-144 / Wilmington).